The primary structure comprises 204 residues: Proteasome subunit beta type-3-B (204 aa).

It belongs to the peptidase T1B family. In terms of assembly, component of the 20S core complex of the 26S proteasome. The 26S proteasome is composed of a core protease (CP), known as the 20S proteasome, capped at one or both ends by the 19S regulatory particle (RP/PA700). The 20S proteasome core is composed of 28 subunits that are arranged in four stacked rings, resulting in a barrel-shaped structure. The two end rings are each formed by seven alpha subunits, and the two central rings are each formed by seven beta subunits. The catalytic chamber with the active sites is on the inside of the barrel.

It localises to the cytoplasm. It is found in the nucleus. Functionally, non-catalytic component of the proteasome, a multicatalytic proteinase complex which is characterized by its ability to cleave peptides with Arg, Phe, Tyr, Leu, and Glu adjacent to the leaving group at neutral or slightly basic pH. The proteasome has an ATP-dependent proteolytic activity. The protein is Proteasome subunit beta type-3-B (PBC2) of Arabidopsis thaliana (Mouse-ear cress).